A 1082-amino-acid chain; its full sequence is MRKNSTSNPSPSHQFLTPPKNTTTVVNNNNNTFVNKNKIINENSNQKMFSVGSLVNQIDKNQQQQQQQQQQTHQVLPQRKFSGVSTMISKYNEQQPSSSSSTASSSSSPSLPPKPLLSTINNINNSGSANNNTPSNLSPNTLSPTSIIKKNNNNNISGSPSPSPSPAPTPTILSPLPSPRRQLPTRPPSPLPKLPSRPTSPVPPNPDEALNTTTTNNNNNNNNNNNNNNNNNNNNNNNNNNNNNSDNNYISKLGSHSVKTLPIPPPNDKPAPPPRPWSSSGTLTTPPTIATTKTSTNINSTNVKYQTLSPSSTTATTATTTTTINNNVTTPPTTPPSQTIAFNNNNNNNNNNNNNNNNNNNSNNNKPLPPTSTKPPRPKIAPRNDISPIPVTSLSTANITNTPTVVIEQTPIIAPIQDSQNIAASDLRTLRQRTFTRKQASMKLNGEDFSSLSLSTTPTSVSPSTPSSANPTPSTTPPSMSPSNSVSNEFLTINSNENINNDLINSFNSDDSNNSNNSNSSLSLASASSSASTTTTSTNSLNDTSFNNISININPNNGLSVSNFISSHKKKTSFISGTLRRDTLDIKTILIEKINVQYTITTQLSQKPSRKSLLPPINSSTSFNKVIKEIIETEADYIDQMEVIINLYYFAALEMSKYKLMTANDIYQIFSNIEELYYVSLRLYPMLLNIIPVLDHENQYPNIEEIFLYNSKAFQRYGSYLSTHDHSIKVLNSLIDGNNVVNQIFQYVKSLPHSKQLNLQSFLIKPCQRLCKYPLLLRELKKALPPEDDSLEAEEHHKIFQRSLILMEKIVNDINGKMANDNKIQSTVKEIGTKDIEQQLRDQTFLKSSNRIKKLKKKGNKVIVTLYLLSQILIIFEKGTFKKKVKIIPLKNILEIIDIERELQFGISINYLNDNDIQNNNNNNQNNLSSTNDTTSSTPPTTTTTTNSTPTTTTTTTNSTPTVNVNTLSIKLSCDNYQDKLIWLNDIDEAINILKILTGSYKFNVSEKDINININNNNNNNNNNNNNNNNNNNNNNNNNNNNNNNINENNINENNINSNNTSLENSGECINNNINNNNNTSN.

Polar residues predominate over residues 1 to 15 (MRKNSTSNPSPSHQF). 5 disordered regions span residues 1 to 29 (MRKNSTSNPSPSHQFLTPPKNTTTVVNNN), 59 to 78 (DKNQQQQQQQQQQTHQVLPQ), 91 to 394 (YNEQ…VTSL), 438 to 488 (KQAS…SVSN), and 504 to 524 (INSFNSDDSNNSNNSNSSLSL). Composition is skewed to low complexity over residues 20–29 (KNTTTVVNNN), 62–71 (QQQQQQQQQQ), 96–109 (PSSSSSTASSSSSP), 116–160 (LLST…SGSP), and 170–184 (PTILSPLPSPRRQLP). The segment covering 185 to 206 (TRPPSPLPKLPSRPTSPVPPNP) has biased composition (pro residues). Low complexity predominate over residues 211 to 244 (NTTTTNNNNNNNNNNNNNNNNNNNNNNNNNNNNN). Residues 262-276 (PIPPPNDKPAPPPRP) are compositionally biased toward pro residues. Residues 282-366 (TLTTPPTIAT…NNNNNSNNNK (85 aa)) are compositionally biased toward low complexity. The segment covering 367 to 379 (PLPPTSTKPPRPK) has biased composition (pro residues). Residues 450–473 (SSLSLSTTPTSVSPSTPSSANPTP) are compositionally biased toward low complexity. Residues 622 to 817 (SFNKVIKEII…EKIVNDINGK (196 aa)) form the DH domain. Positions 838-994 (QQLRDQTFLK…NDIDEAINIL (157 aa)) are PH-like. 2 disordered regions span residues 920-961 (NNNN…NSTP) and 1017-1060 (NNNN…NSNN).

GTPase-activating protein. This Dictyostelium discoideum (Social amoeba) protein is RhoGEF domain-containing protein gxcI (gxcI).